Reading from the N-terminus, the 659-residue chain is Hemocyanin subunit B (659 aa).

A signal peptide spans 1 to 18 (MVAKWCVLAMCLLVAVGA). 3 residues coordinate Cu cation: His-198, His-202, and His-232. Asn-318 carries an N-linked (GlcNAc...) asparagine glycan. Cu cation-binding residues include His-353, His-357, and His-393. Cys-562 and Cys-609 are oxidised to a cystine.

The protein belongs to the tyrosinase family. Hemocyanin subfamily. As to quaternary structure, 36-chain polymer consisting of 6 hexamers, each of which includes 4 different chains, A, B, C and D. In terms of tissue distribution, hemolymph.

Its subcellular location is the secreted. It is found in the extracellular space. Its function is as follows. Hemocyanins are copper-containing oxygen carriers occurring freely dissolved in the hemolymph of many mollusks and arthropods. This is Hemocyanin subunit B (HCB) from Scutigera coleoptrata (House centipede).